The primary structure comprises 90 residues: Sec-independent protein translocase protein TatA (90 aa).

Residues 1–21 (MGGASIWHWIVVGVIVMLLFG) traverse the membrane as a helical segment. The interval 42 to 90 (GMADEDQPQAPVANQSPPPVSATEPVRTLPPHQGEPAPAANASVDRKVG) is disordered.

Belongs to the TatA/E family. In terms of assembly, the Tat system comprises two distinct complexes: a TatABC complex, containing multiple copies of TatA, TatB and TatC subunits, and a separate TatA complex, containing only TatA subunits. Substrates initially bind to the TatABC complex, which probably triggers association of the separate TatA complex to form the active translocon.

Its subcellular location is the cell inner membrane. Part of the twin-arginine translocation (Tat) system that transports large folded proteins containing a characteristic twin-arginine motif in their signal peptide across membranes. TatA could form the protein-conducting channel of the Tat system. This is Sec-independent protein translocase protein TatA from Methylobacterium nodulans (strain LMG 21967 / CNCM I-2342 / ORS 2060).